The sequence spans 655 residues: p-hydroxybenzoic acid efflux pump subunit AaeB (655 aa).

The next 11 membrane-spanning stretches (helical) occupy residues 13-33, 38-58, 69-89, 93-113, 121-141, 152-172, 370-390, 407-427, 431-451, 459-479, and 482-502; these read FAVK…HFQL, WAVL…GGEP, LRII…ISMI, LLMI…SSLV, WGLS…EPLL, EIVI…PRSI, LFWL…IAVV, FIYG…VIIP, QSML…GIEV, MGAL…TFHF, and FLDS…VILL.

Belongs to the aromatic acid exporter ArAE (TC 2.A.85) family.

The protein resides in the cell inner membrane. Forms an efflux pump with AaeA. Could function as a metabolic relief valve, allowing to eliminate certain compounds when they accumulate to high levels in the cell. The sequence is that of p-hydroxybenzoic acid efflux pump subunit AaeB from Salmonella heidelberg (strain SL476).